A 316-amino-acid polypeptide reads, in one-letter code: MEKLNIIFAGTPDFAAKHLSALINSEHNVIAVYTQPDRPAGRGKRLTASAVKELAMEQQIPVYQPANFKEVDSTKQLAALNADLMIVVAYGLLLPQLVLGIPRLGCLNVHGSLLPRWRGAAPIQRAIWAGDTETGVTIMQMDEGLDTGDMLAKVSCPIERDETSASLYEKLALQAPDVLVDTINKLVKGELKAEKQDPQLACYAKKLSKSEALIDWSKDAVFIERCIRAFNPWPVSYFVLDDKVIKVRQAGLLATKSEQTAGTIITASKNGIQVATGEGIINLEVLQLAGKKALPVQDILNSRRELFAQGTLLQQG.

S112–P115 provides a ligand contact to (6S)-5,6,7,8-tetrahydrofolate.

Belongs to the Fmt family.

It catalyses the reaction L-methionyl-tRNA(fMet) + (6R)-10-formyltetrahydrofolate = N-formyl-L-methionyl-tRNA(fMet) + (6S)-5,6,7,8-tetrahydrofolate + H(+). Its function is as follows. Attaches a formyl group to the free amino group of methionyl-tRNA(fMet). The formyl group appears to play a dual role in the initiator identity of N-formylmethionyl-tRNA by promoting its recognition by IF2 and preventing the misappropriation of this tRNA by the elongation apparatus. This chain is Methionyl-tRNA formyltransferase, found in Psychromonas ingrahamii (strain DSM 17664 / CCUG 51855 / 37).